The following is a 45-amino-acid chain: Endo-1,4-beta-xylanase Xyn10A (45 aa).

It belongs to the glycosyl hydrolase 10 (cellulase F) family.

It is found in the secreted. Its subcellular location is the extracellular space. The enzyme catalyses Endohydrolysis of (1-&gt;4)-beta-D-xylosidic linkages in xylans.. It catalyses the reaction Endohydrolysis of (1-&gt;4)-beta-D-glucosidic linkages in cellulose, lichenin and cereal beta-D-glucans.. Its pathway is glycan degradation; xylan degradation. In terms of biological role, has xylanase, avicelase and cellobiohydrolase activity. This Gloeophyllum trabeum (Brown rot fungus) protein is Endo-1,4-beta-xylanase Xyn10A.